Consider the following 124-residue polypeptide: Glutaredoxin-2 (124 aa).

An intrachain disulfide couples C13 to C16.

The protein belongs to the glutaredoxin family. As to quaternary structure, homodimer.

The protein resides in the host cytoplasm. Glutaredoxin necessary for virion morphogenesis and virus replication. Functions as a thiol-disulfide transfer protein between membrane-associated OPG128 and substrates OPG095 or OPG053. The complete pathway for formation of disulfide bonds in intracellular virion membrane proteins sequentially involves oxidation of OPG072, OPG128 and OPG088. Exhibit thioltransferase and dehydroascorbate reductase activities in vitro. The protein is Glutaredoxin-2 (OPG088) of Mus musculus (Mouse).